The sequence spans 252 residues: Ribosomal RNA large subunit methyltransferase E (252 aa).

Residues glycine 48, tryptophan 50, aspartate 68, aspartate 84, and aspartate 107 each contribute to the S-adenosyl-L-methionine site. The active-site Proton acceptor is lysine 147. Residues 194–252 enclose the TRAM domain; the sequence is PVREGDTLEVEIDNLGDEGDGVAKVDGYTLFVSGAEPGDAPEVRVTDVKPRFGFAETLE.

The protein belongs to the class I-like SAM-binding methyltransferase superfamily. RNA methyltransferase RlmE family.

It localises to the cytoplasm. It catalyses the reaction uridine(2552) in 23S rRNA + S-adenosyl-L-methionine = 2'-O-methyluridine(2552) in 23S rRNA + S-adenosyl-L-homocysteine + H(+). Functionally, specifically methylates the uridine in position 2552 of 23S rRNA at the 2'-O position of the ribose in the fully assembled 50S ribosomal subunit. This is Ribosomal RNA large subunit methyltransferase E from Natronomonas pharaonis (strain ATCC 35678 / DSM 2160 / CIP 103997 / JCM 8858 / NBRC 14720 / NCIMB 2260 / Gabara) (Halobacterium pharaonis).